Consider the following 452-residue polypeptide: Pup--protein ligase (452 aa).

E9 serves as a coordination point for Mg(2+). R53 contributes to the ATP binding site. Y55 is a binding site for Mg(2+). Residue D57 is the Proton acceptor of the active site. Residue E63 participates in Mg(2+) binding. 2 residues coordinate ATP: T66 and W419.

It belongs to the Pup ligase/Pup deamidase family. Pup-conjugating enzyme subfamily.

The enzyme catalyses ATP + [prokaryotic ubiquitin-like protein]-L-glutamate + [protein]-L-lysine = ADP + phosphate + N(6)-([prokaryotic ubiquitin-like protein]-gamma-L-glutamyl)-[protein]-L-lysine.. The protein operates within protein degradation; proteasomal Pup-dependent pathway. Its pathway is protein modification; protein pupylation. In terms of biological role, catalyzes the covalent attachment of the prokaryotic ubiquitin-like protein modifier Pup to the proteasomal substrate proteins, thereby targeting them for proteasomal degradation. This tagging system is termed pupylation. The ligation reaction involves the side-chain carboxylate of the C-terminal glutamate of Pup and the side-chain amino group of a substrate lysine. This Acidothermus cellulolyticus (strain ATCC 43068 / DSM 8971 / 11B) protein is Pup--protein ligase.